A 155-amino-acid chain; its full sequence is SsrA-binding protein (155 aa).

It belongs to the SmpB family.

It is found in the cytoplasm. In terms of biological role, required for rescue of stalled ribosomes mediated by trans-translation. Binds to transfer-messenger RNA (tmRNA), required for stable association of tmRNA with ribosomes. tmRNA and SmpB together mimic tRNA shape, replacing the anticodon stem-loop with SmpB. tmRNA is encoded by the ssrA gene; the 2 termini fold to resemble tRNA(Ala) and it encodes a 'tag peptide', a short internal open reading frame. During trans-translation Ala-aminoacylated tmRNA acts like a tRNA, entering the A-site of stalled ribosomes, displacing the stalled mRNA. The ribosome then switches to translate the ORF on the tmRNA; the nascent peptide is terminated with the 'tag peptide' encoded by the tmRNA and targeted for degradation. The ribosome is freed to recommence translation, which seems to be the essential function of trans-translation. The polypeptide is SsrA-binding protein (Streptococcus pyogenes serotype M5 (strain Manfredo)).